Here is a 449-residue protein sequence, read N- to C-terminus: UDP-N-acetylglucosamine 1-carboxyvinyltransferase (449 aa).

Over residues 1–12 (MQVTVNEHDAVE) the composition is skewed to basic and acidic residues. A disordered region spans residues 1–30 (MQVTVNEHDAVERVATATPAGNREAHAHGT). Position 51-52 (51-52 (KN)) interacts with phosphoenolpyruvate. Residue Arg-121 coordinates UDP-N-acetyl-alpha-D-glucosamine. Cys-145 (proton donor) is an active-site residue. Residue Cys-145 is modified to 2-(S-cysteinyl)pyruvic acid O-phosphothioketal. Residues 150 to 154 (RPVDQ), Asp-333, and Ile-355 contribute to the UDP-N-acetyl-alpha-D-glucosamine site.

It belongs to the EPSP synthase family. MurA subfamily.

It is found in the cytoplasm. The enzyme catalyses phosphoenolpyruvate + UDP-N-acetyl-alpha-D-glucosamine = UDP-N-acetyl-3-O-(1-carboxyvinyl)-alpha-D-glucosamine + phosphate. The protein operates within cell wall biogenesis; peptidoglycan biosynthesis. Functionally, cell wall formation. Adds enolpyruvyl to UDP-N-acetylglucosamine. The sequence is that of UDP-N-acetylglucosamine 1-carboxyvinyltransferase from Burkholderia pseudomallei (strain 1710b).